The primary structure comprises 50 residues: Toxic protein HokE (50 aa).

Residues 5-25 (YALAAVIVLCLTVLGFTLLVG) traverse the membrane as a helical segment.

Belongs to the Hok/Gef family.

It is found in the cell inner membrane. Its function is as follows. Toxic component of a type I toxin-antitoxin (TA) system; if it expressed it could be neutralized by antisense antitoxin RNA SokE. The sequence is that of Toxic protein HokE from Escherichia coli (strain K12).